Here is a 313-residue protein sequence, read N- to C-terminus: Zinc transporter ZitB (313 aa).

At 1–20 (MAHSHSHTSSHLPEDNNARR) the chain is on the cytoplasmic side. The chain crosses the membrane as a helical span at residues 21–41 (LLYAFGVTAGFMLVEVVGGFL). The Periplasmic portion of the chain corresponds to 42-47 (SGSLAL). A helical membrane pass occupies residues 48 to 68 (LADAGHMLTDTAALLFALLAV). Residues 69-89 (QFSRRPPTIRHTFGWLRLTTL) are Cytoplasmic-facing. The chain crosses the membrane as a helical span at residues 90-110 (AAFVNAIALVVITILIVWEAI). The Periplasmic segment spans residues 111–121 (ERFRTPRPVEG). The chain crosses the membrane as a helical span at residues 122-142 (GMMMAIAVAGLLANILSFWLL). At 143–159 (HHGSEEKNLNVRAAALH) the chain is on the cytoplasmic side. A helical transmembrane segment spans residues 160–180 (VLGDLLGSVGAIIAALIIIWT). Glycine 181 is a topological domain (periplasmic). The chain crosses the membrane as a helical span at residues 182–202 (WTPADPILSILVSLLVLRSAW). Residues 203–313 (RLLKDSVNEL…GVSGHSHHHH (111 aa)) lie on the Cytoplasmic side of the membrane.

It belongs to the cation diffusion facilitator (CDF) transporter (TC 2.A.4) family. SLC30A subfamily.

The protein localises to the cell inner membrane. Functionally, involved in zinc efflux across the cytoplasmic membrane, thus reducing zinc accumulation in the cytoplasm and rendering bacteria more resistant to zinc. It may contribute to zinc homeostasis at low concentrations of zinc, whereas ZntA is required for growth at more toxic concentrations. The polypeptide is Zinc transporter ZitB (zitB) (Escherichia coli (strain K12)).